We begin with the raw amino-acid sequence, 286 residues long: Shikimate dehydrogenase (NADP(+)) (286 aa).

Shikimate contacts are provided by residues 25-27 (SLS) and Thr72. The Proton acceptor role is filled by Lys76. Glu88 serves as a coordination point for NADP(+). Shikimate contacts are provided by Asn97 and Asp113. NADP(+)-binding positions include 138–142 (GSGGA), 162–167 (NRTIER), and Ile232. Residue Tyr234 participates in shikimate binding. Position 255 (Gly255) interacts with NADP(+).

This sequence belongs to the shikimate dehydrogenase family. Homodimer.

It carries out the reaction shikimate + NADP(+) = 3-dehydroshikimate + NADPH + H(+). The protein operates within metabolic intermediate biosynthesis; chorismate biosynthesis; chorismate from D-erythrose 4-phosphate and phosphoenolpyruvate: step 4/7. Involved in the biosynthesis of the chorismate, which leads to the biosynthesis of aromatic amino acids. Catalyzes the reversible NADPH linked reduction of 3-dehydroshikimate (DHSA) to yield shikimate (SA). This chain is Shikimate dehydrogenase (NADP(+)), found in Magnetococcus marinus (strain ATCC BAA-1437 / JCM 17883 / MC-1).